Consider the following 173-residue polypeptide: Co-chaperone protein HscB homolog (173 aa).

The J domain occupies 5–77 (CHFALFELQP…AQRARYLLTI (73 aa)).

It belongs to the HscB family. As to quaternary structure, interacts with HscA and stimulates its ATPase activity.

Co-chaperone involved in the maturation of iron-sulfur cluster-containing proteins. Seems to help targeting proteins to be folded toward HscA. This Pseudomonas fluorescens (strain Pf0-1) protein is Co-chaperone protein HscB homolog.